The following is a 271-amino-acid chain: Elongation factor Ts (271 aa).

The segment at 76-79 (TDFV) is involved in Mg(2+) ion dislocation from EF-Tu.

The protein belongs to the EF-Ts family.

Its subcellular location is the cytoplasm. Associates with the EF-Tu.GDP complex and induces the exchange of GDP to GTP. It remains bound to the aminoacyl-tRNA.EF-Tu.GTP complex up to the GTP hydrolysis stage on the ribosome. The chain is Elongation factor Ts from Mycolicibacterium gilvum (strain PYR-GCK) (Mycobacterium gilvum (strain PYR-GCK)).